A 156-amino-acid polypeptide reads, in one-letter code: Photosystem I reaction center subunit XI (156 aa).

Transmembrane regions (helical) follow at residues 75–95 (GGLL…SLYA) and 128–148 (FFIG…ALYF).

The protein belongs to the PsaL family.

Its subcellular location is the cellular thylakoid membrane. The chain is Photosystem I reaction center subunit XI from Crocosphaera subtropica (strain ATCC 51142 / BH68) (Cyanothece sp. (strain ATCC 51142)).